Consider the following 486-residue polypeptide: MKEIKHFINGAFVGSASGRTFEDVNPANGQVIARVHEAGRAEVDAAVQAARAALKGPWGKMSVSERAEILHRVADGITARFDEFLEAECLDTGKPKSLASHIDIPRGAANFKVFADLLKNVATEAFEMATPDGSGAINYAVRRPKGVIGVISPWNLPLLLMTWKVGPALACGNTVVVKPSEETPLTTALLGEVMQAAGVPAGVYNVVHGFGPDSAGAFLTEHPDVNAITFTGETRTGEAIMRAAAKGVRPVSFELGGKNAGIVFADCDLDKAIEGSMRSVFANGGQVCLGTERLYVERPIFDEFVARLKAGAESLVIGTPDDPQANFGPLISLQHREKVLSYYQKAVDEGATVVTGGGVPEMPAELAGGAWVQPTIWTGLADGAAVVTEEIFGPCCHIRPFDREEEAVELANSLPYGLAATIWTENTSRAHRVAGQLEAGIVWVNSWFLRDLRTAFGGSKQSGIGREGGVHSLEFYTELKNICVKL.

Active-site residues include Glu-254 and Cys-288.

It belongs to the aldehyde dehydrogenase family.

The catalysed reaction is (2Z,4E)-2-hydroxy-6-oxohexa-2,4-dienoate + NAD(+) + H2O = (2Z,4E)-2-hydroxyhexa-2,4-dienedioate + NADH + 2 H(+). It functions in the pathway aromatic compound metabolism; benzoate degradation via hydroxylation. In terms of biological role, 2-hydroxymuconic acid semialdehyde can be converted to 2-hydroxypent-2,4-dienoate either directly by the action of 2-hydroxymuconic semialdehyde hydrolase (HMSH) or by the action of three sequential enzymes, the first of which is HMSD. The polypeptide is 2-hydroxymuconic semialdehyde dehydrogenase (dmpC) (Pseudomonas sp. (strain CF600)).